Consider the following 174-residue polypeptide: Small ribosomal subunit protein uS5 (174 aa).

Residues 19–82 enclose the S5 DRBM domain; that stretch reads LREKMVAINR…DEARRKMVKV (64 aa).

It belongs to the universal ribosomal protein uS5 family. Part of the 30S ribosomal subunit. Contacts proteins S4 and S8.

With S4 and S12 plays an important role in translational accuracy. In terms of biological role, located at the back of the 30S subunit body where it stabilizes the conformation of the head with respect to the body. In Azoarcus sp. (strain BH72), this protein is Small ribosomal subunit protein uS5.